Consider the following 423-residue polypeptide: Imidazolonepropionase (423 aa).

Fe(3+) is bound by residues histidine 78 and histidine 80. Residues histidine 78 and histidine 80 each coordinate Zn(2+). Positions 87, 150, and 183 each coordinate 4-imidazolone-5-propanoate. An N-formimidoyl-L-glutamate-binding site is contributed by tyrosine 150. Histidine 247 contacts Fe(3+). Position 247 (histidine 247) interacts with Zn(2+). Glutamate 250 is a binding site for 4-imidazolone-5-propanoate. Residue aspartate 322 participates in Fe(3+) binding. Aspartate 322 is a Zn(2+) binding site. N-formimidoyl-L-glutamate is bound by residues asparagine 324 and glycine 326. Residue serine 327 coordinates 4-imidazolone-5-propanoate.

This sequence belongs to the metallo-dependent hydrolases superfamily. HutI family. Zn(2+) serves as cofactor. The cofactor is Fe(3+).

Its subcellular location is the cytoplasm. It carries out the reaction 4-imidazolone-5-propanoate + H2O = N-formimidoyl-L-glutamate. The protein operates within amino-acid degradation; L-histidine degradation into L-glutamate; N-formimidoyl-L-glutamate from L-histidine: step 3/3. Its function is as follows. Catalyzes the hydrolytic cleavage of the carbon-nitrogen bond in imidazolone-5-propanoate to yield N-formimidoyl-L-glutamate. It is the third step in the universal histidine degradation pathway. The polypeptide is Imidazolonepropionase (Bacillus cytotoxicus (strain DSM 22905 / CIP 110041 / 391-98 / NVH 391-98)).